Here is a 715-residue protein sequence, read N- to C-terminus: Myosin light chain kinase 3 (715 aa).

The interval 67 to 114 is disordered; that stretch reads VTLPNDPSSQHSPEAHTGASEPLKPVSAGESSKALQKAKEISVKSSEP. The Protein kinase domain occupies 404-659; sequence VNPVEVLGGG…ASGCMKHSWL (256 aa). Residues 410–418 and lysine 433 each bind ATP; that span reads LGGGRFGQV. Aspartate 525 serves as the catalytic Proton acceptor.

The protein belongs to the protein kinase superfamily. CAMK Ser/Thr protein kinase family. It depends on Mg(2+) as a cofactor. In terms of processing, phosphorylated on serine residues.

Its subcellular location is the cytoplasm. It carries out the reaction L-seryl-[myosin light chain] + ATP = O-phospho-L-seryl-[myosin light chain] + ADP + H(+). It catalyses the reaction L-threonyl-[myosin light chain] + ATP = O-phospho-L-threonyl-[myosin light chain] + ADP + H(+). Kinase that phosphorylates MYL2 in vitro. Increases cardiomyocyte contractility. Required for sarcomere formation in the developing heart. In Danio rerio (Zebrafish), this protein is Myosin light chain kinase 3 (mylk3).